The primary structure comprises 166 residues: Interferon gamma (166 aa).

A signal peptide spans 1–23 (MSYTTYFLAFQLCVTLCFSGSYC). Q24 is modified (pyrrolidone carboxylic acid). N-linked (GlcNAc...) asparagine glycans are attached at residues N39 and N106.

This sequence belongs to the type II (or gamma) interferon family. Homodimer. Interacts with IFNGR1 (via extracellular domain); this interaction promotes IFNGR1 dimerization. In terms of tissue distribution, released primarily from activated T lymphocytes.

It is found in the secreted. Its function is as follows. Type II interferon produced by immune cells such as T-cells and NK cells that plays crucial roles in antimicrobial, antiviral, and antitumor responses by activating effector immune cells and enhancing antigen presentation. Primarily signals through the JAK-STAT pathway after interaction with its receptor IFNGR1 to affect gene regulation. Upon IFNG binding, IFNGR1 intracellular domain opens out to allow association of downstream signaling components JAK2, JAK1 and STAT1, leading to STAT1 activation, nuclear translocation and transcription of IFNG-regulated genes. Many of the induced genes are transcription factors such as IRF1 that are able to further drive regulation of a next wave of transcription. Plays a role in class I antigen presentation pathway by inducing a replacement of catalytic proteasome subunits with immunoproteasome subunits. In turn, increases the quantity, quality, and repertoire of peptides for class I MHC loading. Increases the efficiency of peptide generation also by inducing the expression of activator PA28 that associates with the proteasome and alters its proteolytic cleavage preference. Up-regulates as well MHC II complexes on the cell surface by promoting expression of several key molecules such as cathepsins B/CTSB, H/CTSH, and L/CTSL. Participates in the regulation of hematopoietic stem cells during development and under homeostatic conditions by affecting their development, quiescence, and differentiation. This is Interferon gamma (IFNG) from Sus scrofa (Pig).